Here is a 312-residue protein sequence, read N- to C-terminus: tRNA dimethylallyltransferase (312 aa).

ATP is bound at residue 19-26 (GPSGSGKS). 21–26 (SGSGKS) serves as a coordination point for substrate. An interaction with substrate tRNA region spans residues 44-47 (DSLS).

It belongs to the IPP transferase family. Monomer. Mg(2+) is required as a cofactor.

It carries out the reaction adenosine(37) in tRNA + dimethylallyl diphosphate = N(6)-dimethylallyladenosine(37) in tRNA + diphosphate. Catalyzes the transfer of a dimethylallyl group onto the adenine at position 37 in tRNAs that read codons beginning with uridine, leading to the formation of N6-(dimethylallyl)adenosine (i(6)A). In Helicobacter pylori (strain J99 / ATCC 700824) (Campylobacter pylori J99), this protein is tRNA dimethylallyltransferase.